The primary structure comprises 442 residues: Trigger factor (442 aa).

The region spanning 176–259 is the PPIase FKBP-type domain; the sequence is GDFISLSLYV…VNAVIEISSP (84 aa).

Belongs to the FKBP-type PPIase family. Tig subfamily.

The protein localises to the cytoplasm. It carries out the reaction [protein]-peptidylproline (omega=180) = [protein]-peptidylproline (omega=0). Involved in protein export. Acts as a chaperone by maintaining the newly synthesized protein in an open conformation. Functions as a peptidyl-prolyl cis-trans isomerase. The protein is Trigger factor of Chlamydia trachomatis serovar L2 (strain ATCC VR-902B / DSM 19102 / 434/Bu).